Consider the following 681-residue polypeptide: DNA-directed RNA polymerase subunit beta' (681 aa).

The Zn(2+) site is built by Cys69, Cys71, Cys87, and Cys90. 3 residues coordinate Mg(2+): Asp489, Asp491, and Asp493.

It belongs to the RNA polymerase beta' chain family. RpoC1 subfamily. In terms of assembly, in plastids the minimal PEP RNA polymerase catalytic core is composed of four subunits: alpha, beta, beta', and beta''. When a (nuclear-encoded) sigma factor is associated with the core the holoenzyme is formed, which can initiate transcription. It depends on Mg(2+) as a cofactor. Zn(2+) is required as a cofactor.

It is found in the plastid. It localises to the chloroplast. The enzyme catalyses RNA(n) + a ribonucleoside 5'-triphosphate = RNA(n+1) + diphosphate. Its function is as follows. DNA-dependent RNA polymerase catalyzes the transcription of DNA into RNA using the four ribonucleoside triphosphates as substrates. This Nicotiana sylvestris (Wood tobacco) protein is DNA-directed RNA polymerase subunit beta'.